The following is an 86-amino-acid chain: OMEGA-stichotoxin-Shd4a (86 aa).

The N-terminal stretch at 1–23 (MASFRTLFACVVILCCVLWSSMA) is a signal peptide. Positions 24 to 36 (RYGEDMEVETEMN) are excised as a propeptide. Positions 40–82 (EGVRCTGQHASSFCLNGGTCRHIASLGEYYCICPGDYTGHRCD) constitute an EGF-like domain. Cystine bridges form between Cys-44–Cys-59, Cys-53–Cys-70, and Cys-72–Cys-81.

The protein belongs to the EGF domain peptide family.

It is found in the secreted. The protein localises to the nematocyst. Functionally, has both toxic and EGF activity. Its EGF activity consists of rounding cells (morphological change) and inducing tyrosine phosphorylation of the EGFR in A431 cells, but with a lower potency that human EGF. This chain is OMEGA-stichotoxin-Shd4a, found in Stichodactyla haddoni (Saddle carpet anemone).